The following is a 423-amino-acid chain: Protein CLP1 homolog (423 aa).

ATP is bound by residues Glu19, Lys60, and 122–127 (DVGKTT).

Belongs to the Clp1 family. Clp1 subfamily.

It is found in the nucleus. Its function is as follows. Required for endonucleolytic cleavage during polyadenylation-dependent pre-mRNA 3'-end formation. The chain is Protein CLP1 homolog (cbc) from Anopheles gambiae (African malaria mosquito).